The following is a 224-amino-acid chain: Protein LURP-one-related 1 (224 aa).

The interval 1–23 (MQQPYEYRYPQGTGPSAPPPPPK) is disordered.

The protein belongs to the LOR family.

Its function is as follows. Might be related to the phospholipid scramblase and tubby-like superfamily of membrane tethered transcription factors. This Arabidopsis thaliana (Mouse-ear cress) protein is Protein LURP-one-related 1.